A 310-amino-acid polypeptide reads, in one-letter code: Methionyl-tRNA formyltransferase (310 aa).

Position 110 to 113 (110 to 113) interacts with (6S)-5,6,7,8-tetrahydrofolate; sequence SVLP.

Belongs to the Fmt family.

The enzyme catalyses L-methionyl-tRNA(fMet) + (6R)-10-formyltetrahydrofolate = N-formyl-L-methionyl-tRNA(fMet) + (6S)-5,6,7,8-tetrahydrofolate + H(+). Functionally, attaches a formyl group to the free amino group of methionyl-tRNA(fMet). The formyl group appears to play a dual role in the initiator identity of N-formylmethionyl-tRNA by promoting its recognition by IF2 and preventing the misappropriation of this tRNA by the elongation apparatus. The sequence is that of Methionyl-tRNA formyltransferase from Mycolicibacterium vanbaalenii (strain DSM 7251 / JCM 13017 / BCRC 16820 / KCTC 9966 / NRRL B-24157 / PYR-1) (Mycobacterium vanbaalenii).